The primary structure comprises 2724 residues: Eukaryotic translation initiation factor 2-alpha kinase 2 (2724 aa).

Residues 1–24 (MLNMVDQKKGINNGSSTGVINNIN) lie on the Cytoplasmic side of the membrane. A helical transmembrane segment spans residues 25–45 (GKIKNEFIFMYLIAAGGFSCV). The Extracellular segment spans residues 46–673 (YKIKKKKSNK…KFYIKRHNQK (628 aa)). The segment at 112 to 153 (KRERRGRRKEQQREQMGDKRREKRQQQRREKRKEQNTNTKKR) is disordered. Over residues 120 to 146 (KEQQREQMGDKRREKRQQQRREKRKEQ) the composition is skewed to basic and acidic residues. Residues 674-694 (TYFFENIIFYHYIIMLFLDIE) form a helical membrane-spanning segment. Topologically, residues 695-718 (KYKNKFVSLFQYNLYRKLLKISKR) are cytoplasmic. A helical membrane pass occupies residues 719–739 (IVLMLHRIETNVICIFLLKHF). The Extracellular portion of the chain corresponds to 740-800 (EDYFIRKGIH…KKNIFNFFIE (61 aa)). The chain crosses the membrane as a helical span at residues 801–821 (LFLNNIQINIFKKFEILYLII). Residues 822 to 832 (YFYNYFEKSKQ) lie on the Cytoplasmic side of the membrane. The helical transmembrane segment at 833–853 (FDIEGIGDIIYVWLSLINLFY) threads the bilayer. Residues 854–876 (DDKGKCIKILSKIFAKLNKKLYY) are Extracellular-facing. Residues 877–897 (VYWGKLYIIMNWTTIVDTIFI) form a helical membrane-spanning segment. Residues 898-908 (RNVLSINREGN) are Cytoplasmic-facing. Residues 909 to 929 (YYWVIIVLKMINYFVNVAYTL) traverse the membrane as a helical segment. The Extracellular segment spans residues 930 to 996 (TRMDIFFIKV…KKNYDIYTKY (67 aa)). The chain crosses the membrane as a helical span at residues 997–1017 (AILFIYCFIIQAYYFDTLFNI). Topologically, residues 1018–2724 (RSLESNEIAN…GDIFLPDKCP (1707 aa)) are cytoplasmic. An ATP-binding site is contributed by Lys2029. Residues 2084–2719 (KHYFTKCGIL…KIISAGDIFL (636 aa)) form the Protein kinase domain. Residues 2120–2155 (INTLNEENQNMFCKNKEKKEENYKKIDTNISQFSEK) are a coiled coil. Asp2229 acts as the Proton acceptor in catalysis. Residues 2479 to 2507 (EKMDKNKIAAQKKKKKKENKHPIGRRSTN) form a disordered region. The span at 2488–2502 (AQKKKKKKENKHPIG) shows a compositional bias: basic residues.

It belongs to the protein kinase superfamily. Ser/Thr protein kinase family. GCN2 subfamily. Post-translationally, auto-phosphorylated.

It localises to the membrane. The catalysed reaction is L-seryl-[protein] + ATP = O-phospho-L-seryl-[protein] + ADP + H(+). It catalyses the reaction L-threonyl-[protein] + ATP = O-phospho-L-threonyl-[protein] + ADP + H(+). Phosphorylates translation factor eIF2alpha in salivary gland sporozoites during dormancy, which leads to an inhibition of protein translation and accumulation of stalled mRNAs into granules. This Plasmodium berghei (strain Anka) protein is Eukaryotic translation initiation factor 2-alpha kinase 2.